The chain runs to 650 residues: Chaperone protein DnaK (650 aa).

Thr-200 carries the phosphothreonine; by autocatalysis modification. The tract at residues 614–635 (AGAAGAAGAAEGAAHAGGAQQA) is disordered.

This sequence belongs to the heat shock protein 70 family.

Functionally, acts as a chaperone. In Burkholderia lata (strain ATCC 17760 / DSM 23089 / LMG 22485 / NCIMB 9086 / R18194 / 383), this protein is Chaperone protein DnaK.